A 129-amino-acid polypeptide reads, in one-letter code: Small ribosomal subunit protein uS11 (129 aa).

This sequence belongs to the universal ribosomal protein uS11 family. Part of the 30S ribosomal subunit. Interacts with proteins S7 and S18. Binds to IF-3.

Located on the platform of the 30S subunit, it bridges several disparate RNA helices of the 16S rRNA. Forms part of the Shine-Dalgarno cleft in the 70S ribosome. In Serratia proteamaculans (strain 568), this protein is Small ribosomal subunit protein uS11.